A 158-amino-acid polypeptide reads, in one-letter code: NAD(P)H-quinone oxidoreductase subunit J, chloroplastic (158 aa).

This sequence belongs to the complex I 30 kDa subunit family. NDH is composed of at least 16 different subunits, 5 of which are encoded in the nucleus.

The protein localises to the plastid. The protein resides in the chloroplast thylakoid membrane. It catalyses the reaction a plastoquinone + NADH + (n+1) H(+)(in) = a plastoquinol + NAD(+) + n H(+)(out). It carries out the reaction a plastoquinone + NADPH + (n+1) H(+)(in) = a plastoquinol + NADP(+) + n H(+)(out). Its function is as follows. NDH shuttles electrons from NAD(P)H:plastoquinone, via FMN and iron-sulfur (Fe-S) centers, to quinones in the photosynthetic chain and possibly in a chloroplast respiratory chain. The immediate electron acceptor for the enzyme in this species is believed to be plastoquinone. Couples the redox reaction to proton translocation, and thus conserves the redox energy in a proton gradient. The sequence is that of NAD(P)H-quinone oxidoreductase subunit J, chloroplastic from Chloranthus spicatus (Chulantree).